The chain runs to 595 residues: Probable L-gulonolactone oxidase 1 (595 aa).

The first 18 residues, 1 to 18, serve as a signal peptide directing secretion; the sequence is MAFWLSLIFFCFCTFASS. The 183-residue stretch at 47 to 229 folds into the FAD-binding PCMH-type domain; it reads SICEAAKVEY…SQVTFQLQPM (183 aa).

Belongs to the oxygen-dependent FAD-linked oxidoreductase family. FAD serves as cofactor.

The enzyme catalyses L-gulono-1,4-lactone + O2 = L-ascorbate + H2O2 + H(+). The protein operates within cofactor biosynthesis; L-ascorbate biosynthesis. In terms of biological role, may be involved in the biosynthesis of ascorbic acid. This chain is Probable L-gulonolactone oxidase 1, found in Arabidopsis thaliana (Mouse-ear cress).